Consider the following 561-residue polypeptide: uncharacterized protein (561 aa).

Residues 1 to 11 show a composition bias toward polar residues; it reads MSQVSLPSQLK. Disordered regions lie at residues 1–22 and 522–561; these read MSQV…SRCR and CSLP…IMLP. A compositionally biased stretch (low complexity) spans 541–561; that stretch reads QQPQQAQAEQAQQPQQQIMLP.

To Synechocystis PCC 6803 sll0335 and to M.tuberculosis Rv2567.

This is an uncharacterized protein from Mycobacterium leprae (strain TN).